Here is a 499-residue protein sequence, read N- to C-terminus: Probable cytosol aminopeptidase (499 aa).

Lys-262 and Asp-267 together coordinate Mn(2+). The active site involves Lys-274. Mn(2+) contacts are provided by Asp-285, Asp-344, and Glu-346. Arg-348 is an active-site residue.

It belongs to the peptidase M17 family. Mn(2+) is required as a cofactor.

The protein localises to the cytoplasm. It carries out the reaction Release of an N-terminal amino acid, Xaa-|-Yaa-, in which Xaa is preferably Leu, but may be other amino acids including Pro although not Arg or Lys, and Yaa may be Pro. Amino acid amides and methyl esters are also readily hydrolyzed, but rates on arylamides are exceedingly low.. It catalyses the reaction Release of an N-terminal amino acid, preferentially leucine, but not glutamic or aspartic acids.. Functionally, presumably involved in the processing and regular turnover of intracellular proteins. Catalyzes the removal of unsubstituted N-terminal amino acids from various peptides. This is Probable cytosol aminopeptidase from Protochlamydia amoebophila (strain UWE25).